Consider the following 141-residue polypeptide: Large ribosomal subunit protein uL11 (141 aa).

It belongs to the universal ribosomal protein uL11 family. Part of the ribosomal stalk of the 50S ribosomal subunit. Interacts with L10 and the large rRNA to form the base of the stalk. L10 forms an elongated spine to which L12 dimers bind in a sequential fashion forming a multimeric L10(L12)X complex. Post-translationally, one or more lysine residues are methylated.

Forms part of the ribosomal stalk which helps the ribosome interact with GTP-bound translation factors. The chain is Large ribosomal subunit protein uL11 from Methylacidiphilum infernorum (isolate V4) (Methylokorus infernorum (strain V4)).